A 247-amino-acid chain; its full sequence is Nodulation protein H (247 aa).

The segment at 1–17 (MTHSTLPPQPFAILAMP) is hydrophobic.

Its function is as follows. Required for the formation of sulfated nod factor. Proposed to transfer activated sulfate (PAPS) to a N-acetylglucosamine of the nod factor. This is Nodulation protein H (nodH) from Rhizobium meliloti (strain 1021) (Ensifer meliloti).